The sequence spans 256 residues: Thiazole synthase (256 aa).

Residue K96 is the Schiff-base intermediate with DXP of the active site. 1-deoxy-D-xylulose 5-phosphate-binding positions include G157, 183–184, and 205–206; these read AG and NT.

It belongs to the ThiG family. As to quaternary structure, homotetramer. Forms heterodimers with either ThiH or ThiS.

The protein resides in the cytoplasm. The catalysed reaction is [ThiS sulfur-carrier protein]-C-terminal-Gly-aminoethanethioate + 2-iminoacetate + 1-deoxy-D-xylulose 5-phosphate = [ThiS sulfur-carrier protein]-C-terminal Gly-Gly + 2-[(2R,5Z)-2-carboxy-4-methylthiazol-5(2H)-ylidene]ethyl phosphate + 2 H2O + H(+). It functions in the pathway cofactor biosynthesis; thiamine diphosphate biosynthesis. Catalyzes the rearrangement of 1-deoxy-D-xylulose 5-phosphate (DXP) to produce the thiazole phosphate moiety of thiamine. Sulfur is provided by the thiocarboxylate moiety of the carrier protein ThiS. In vitro, sulfur can be provided by H(2)S. In Bacillus cereus (strain ATCC 10987 / NRS 248), this protein is Thiazole synthase.